Consider the following 721-residue polypeptide: MDGKVGSTTTGCPVIHGGMTSTGTSNTAWWPNALNLDILHQHDTKTNPMEKDFNYREEVKKLDFEALKKDLHALMTDSQAWWPADWGHYGGLMIRMSWHAAGSYRVADGRGGAGTGNQRFAPLNSWPDNVNLDKARRLLWPIKKKYGNKISWADLIVLAGTIAYESMGLKTFGFGFGREDIWHPEKDVYWGSEQEWLGAKRYDGKSRESLENPLAAVQMGLIYVNPEGVNGQPDPLRTAQDVRVTFGRMAMNDEETVALTAGGHTVGKCHGNGNAKLLGPNPEAANVEDQGLGWINKTTRGIGRNTVSSGIEGAWTTHPTQWDNGYFYLLLNYDWELKKSPAGAWQWEPIHIKEEDKPVDVEDPAIRHNPIMTDADMAMKMDPVYRKIAERFYQDPDYFAEVFARAWFKLTHRDMGPKTRYIGPDVPKEDLIWQDPVPAGNRAYDIAAAKAKIAASNLTIGEMVSTAWDSARTFRGSDKRGGANGARIRLKPQKDWEGNEPQRLTKVLQILEDIATDTGASVADVIILAGNVGIEKAAKAAGFDIIVPFAPGRGDATDDMTDAESFDVLEPLHDGYRNWLKKTYDVRPEELMLDRTQLMGLTAHEMTVLVGGLRVLGTNHNNTQYGVFTDRVGALTNDFFVNLTDMANVWIPSKDNLYEIRDRKAGNIKWTATRVDLVFGSNSILRSYAEVYAQDDNKGKFIQDFVAAWTKVMNADRFDLA.

The segment at residues 98 to 223 is a cross-link (tryptophyl-tyrosyl-methioninium (Trp-Tyr) (with M-249)); that stretch reads WHAAGSYRVA…LAAVQMGLIY (126 aa). Catalysis depends on His-99, which acts as the Proton acceptor. A cross-link (tryptophyl-tyrosyl-methioninium (Tyr-Met) (with W-98)) is located at residues 223 to 249; that stretch reads YVNPEGVNGQPDPLRTAQDVRVTFGRM. His-264 provides a ligand contact to heme b.

This sequence belongs to the peroxidase family. Peroxidase/catalase subfamily. As to quaternary structure, homodimer or homotetramer. Requires heme b as cofactor. Formation of the three residue Trp-Tyr-Met cross-link is important for the catalase, but not the peroxidase activity of the enzyme.

It catalyses the reaction H2O2 + AH2 = A + 2 H2O. The enzyme catalyses 2 H2O2 = O2 + 2 H2O. Its function is as follows. Bifunctional enzyme with both catalase and broad-spectrum peroxidase activity. In Legionella pneumophila subsp. pneumophila (strain Philadelphia 1 / ATCC 33152 / DSM 7513), this protein is Catalase-peroxidase 1.